Here is a 452-residue protein sequence, read N- to C-terminus: Transcription factor SMP1 (452 aa).

The region spanning arginine 3 to tyrosine 57 is the MADS-box domain. A DNA-binding region (mef2-type) is located at residues serine 58–aspartate 87. The tract at residues asparagine 97 to aspartate 142 is disordered. Residues serine 115–serine 127 are compositionally biased toward low complexity.

This sequence belongs to the MEF2 family. As to quaternary structure, can heterodimerize with RLM1. Interacts with HOG1. Post-translationally, phosphorylated by HOG1.

It localises to the nucleus. Its function is as follows. Transcription factor that controls part of the HOG1-mediated osmostress responses. Binds to the DNA sequence 5'-ACTACTA[TA](4)TAG-3'. Does not appear to function in the MPK1 pathway. This is Transcription factor SMP1 (SMP1) from Saccharomyces cerevisiae (strain ATCC 204508 / S288c) (Baker's yeast).